We begin with the raw amino-acid sequence, 273 residues long: Urease accessory protein UreD (273 aa).

This sequence belongs to the UreD family. UreD, UreF and UreG form a complex that acts as a GTP-hydrolysis-dependent molecular chaperone, activating the urease apoprotein by helping to assemble the nickel containing metallocenter of UreC. The UreE protein probably delivers the nickel.

It is found in the cytoplasm. In terms of biological role, required for maturation of urease via the functional incorporation of the urease nickel metallocenter. The protein is Urease accessory protein UreD of Rhizobium johnstonii (strain DSM 114642 / LMG 32736 / 3841) (Rhizobium leguminosarum bv. viciae).